The sequence spans 178 residues: ATP synthase subunit delta (178 aa).

It belongs to the ATPase delta chain family. F-type ATPases have 2 components, F(1) - the catalytic core - and F(0) - the membrane proton channel. F(1) has five subunits: alpha(3), beta(3), gamma(1), delta(1), epsilon(1). F(0) has three main subunits: a(1), b(2) and c(10-14). The alpha and beta chains form an alternating ring which encloses part of the gamma chain. F(1) is attached to F(0) by a central stalk formed by the gamma and epsilon chains, while a peripheral stalk is formed by the delta and b chains.

Its subcellular location is the cell membrane. Its function is as follows. F(1)F(0) ATP synthase produces ATP from ADP in the presence of a proton or sodium gradient. F-type ATPases consist of two structural domains, F(1) containing the extramembraneous catalytic core and F(0) containing the membrane proton channel, linked together by a central stalk and a peripheral stalk. During catalysis, ATP synthesis in the catalytic domain of F(1) is coupled via a rotary mechanism of the central stalk subunits to proton translocation. This protein is part of the stalk that links CF(0) to CF(1). It either transmits conformational changes from CF(0) to CF(1) or is implicated in proton conduction. This chain is ATP synthase subunit delta, found in Streptococcus thermophilus (strain ATCC BAA-250 / LMG 18311).